A 990-amino-acid polypeptide reads, in one-letter code: Presequence protease, mitochondrial (990 aa).

The N-terminal 25 residues, 1-25 (MLRLKSLKKPVQAVVRRFATTSAPT), are a transit peptide targeting the mitochondrion. H89 lines the Zn(2+) pocket. Catalysis depends on E92, which acts as the Proton acceptor. A Zn(2+)-binding site is contributed by H93. Residue E165 is part of the active site. E190 contacts Zn(2+).

The protein belongs to the peptidase M16 family. PreP subfamily. Monomer and homodimer; homodimerization is induced by binding of the substrate. The cofactor is Zn(2+).

Its subcellular location is the mitochondrion intermembrane space. It is found in the mitochondrion matrix. In terms of biological role, degrades mitochondrial transit peptides after their cleavage in the intermembrane space or in the matrix, and presequence peptides; clearance of these peptides is required to keep the presequence processing machinery running. Preferentially cleaves the N-terminal side of paired basic amino acid residues. Also degrades other unstructured peptides. May function as an ATP-dependent peptidase as opposed to a metalloendopeptidase. The chain is Presequence protease, mitochondrial (CYM1) from Yarrowia lipolytica (strain CLIB 122 / E 150) (Yeast).